The primary structure comprises 281 residues: 2-dehydro-3-deoxyphosphooctonate aldolase (281 aa).

Belongs to the KdsA family.

Its subcellular location is the cytoplasm. The enzyme catalyses D-arabinose 5-phosphate + phosphoenolpyruvate + H2O = 3-deoxy-alpha-D-manno-2-octulosonate-8-phosphate + phosphate. The protein operates within carbohydrate biosynthesis; 3-deoxy-D-manno-octulosonate biosynthesis; 3-deoxy-D-manno-octulosonate from D-ribulose 5-phosphate: step 2/3. Its pathway is bacterial outer membrane biogenesis; lipopolysaccharide biosynthesis. The polypeptide is 2-dehydro-3-deoxyphosphooctonate aldolase (Azotobacter vinelandii (strain DJ / ATCC BAA-1303)).